A 193-amino-acid polypeptide reads, in one-letter code: Frataxin, mitochondrial (193 aa).

Residues 1–72 (MIFNFLNKAS…KQQQQLSKSF (72 aa)) constitute a mitochondrion transit peptide.

The protein belongs to the frataxin family. As to quaternary structure, monomer. Oligomer.

Its subcellular location is the mitochondrion. The enzyme catalyses 4 Fe(2+) + O2 + 4 H(+) = 4 Fe(3+) + 2 H2O. In terms of biological role, promotes the biosynthesis of heme as well as the assembly and repair of iron-sulfur clusters by delivering Fe(2+) to proteins involved in these pathways. May play a role in the protection against iron-catalyzed oxidative stress through its ability to catalyze the oxidation of Fe(2+) to Fe(3+). May be able to store large amounts of the metal in the form of a ferrihydrite mineral by oligomerization. The polypeptide is Frataxin, mitochondrial (fxn) (Dictyostelium discoideum (Social amoeba)).